The chain runs to 855 residues: DNA mismatch repair protein MutS (855 aa).

Position 613–620 (Gly613–Ser620) interacts with ATP. Residues Thr796–Gln816 form a disordered region.

The protein belongs to the DNA mismatch repair MutS family.

Its function is as follows. This protein is involved in the repair of mismatches in DNA. It is possible that it carries out the mismatch recognition step. This protein has a weak ATPase activity. This Pseudomonas aeruginosa (strain LESB58) protein is DNA mismatch repair protein MutS.